The chain runs to 109 residues: Large ribosomal subunit protein uL24 (109 aa).

Belongs to the universal ribosomal protein uL24 family. As to quaternary structure, part of the 50S ribosomal subunit.

Its function is as follows. One of two assembly initiator proteins, it binds directly to the 5'-end of the 23S rRNA, where it nucleates assembly of the 50S subunit. One of the proteins that surrounds the polypeptide exit tunnel on the outside of the subunit. This is Large ribosomal subunit protein uL24 from Rickettsia canadensis (strain McKiel).